The chain runs to 490 residues: MSPKQEEYEVERIVDEKLDRNGAVKLYRIRWLNYSSRSDTWEPPENLSGCSAVLAEWKRRKRRLKGSNSDSDSPHHASNPHPNSRQKHQHQTSKSVPRSQRFSRELNVKKENKKVFSSQTTKRQSRKQSTALTTNDTSIILDDSLHTNSKKLGKTRNEVKEESQKRELVSNSIKEATSPKTSSILTKPRNPSKLDSYTHLSFYEKRELFRKKLREIEGPEVTLVNEVDDEPCPSLDFQFISQYRLTQGVIPPDPNFQSGCNCSSLGGCDLNNPSRCECLDDLDEPTHFAYDAQGRVRADTGAVIYECNSFCSCSMECPNRVVQRGRTLPLEIFKTKEKGWGVRSLRFAPAGTFITCYLGEVITSAEAAKRDKNYDDDGITYLFDLDMFDDASEYTVDAQNYGDVSRFFNHSCSPNIAIYSAVRNHGFRTIYDLAFFAIKDIQPLEELTFDYAGAKDFSPVQSQKSQQNRISKLRRQCKCGSANCRGWLFG.

Residues 8–69 form the Chromo domain; that stretch reads YEVERIVDEK…RKRRLKGSNS (62 aa). Disordered stretches follow at residues 61–133 and 150–190; these read KRRL…TALT and KKLG…KPRN. The segment covering 102–114 has biased composition (basic and acidic residues); the sequence is FSRELNVKKENKK. Residues 115-133 show a composition bias toward polar residues; it reads VFSSQTTKRQSRKQSTALT. Lysine 127 carries the post-translational modification N6,N6,N6-trimethyllysine; alternate. At lysine 127 the chain carries N6-methyllysine; alternate. Positions 155–168 are enriched in basic and acidic residues; that stretch reads TRNEVKEESQKREL. Positions 169 to 185 are enriched in polar residues; that stretch reads VSNSIKEATSPKTSSIL. The region spanning 258 to 325 is the Pre-SET domain; sequence SGCNCSSLGG…ECPNRVVQRG (68 aa). 9 residues coordinate Zn(2+): cysteine 260, cysteine 262, cysteine 268, cysteine 276, cysteine 278, cysteine 307, cysteine 311, cysteine 313, and cysteine 317. One can recognise an SET domain in the interval 328–452; that stretch reads LPLEIFKTKE…PLEELTFDYA (125 aa). Residues 338-340, tyrosine 381, arginine 406, and 407-410 contribute to the S-adenosyl-L-methionine site; these read KGW and FFNH. Cysteine 412 contacts Zn(2+). The segment at 453–472 is autoregulatory loop; the sequence is GAKDFSPVQSQKSQQNRISK. Lysine 455 bears the N6,N6,N6-trimethyllysine; by autocatalysis; alternate mark. Lysine 455 carries the N6,N6-dimethyllysine; by autocatalysis; alternate modification. Position 455 is an N6-methyllysine; by autocatalysis; alternate (lysine 455). N6-methyllysine is present on lysine 464. The Post-SET domain occupies 473 to 489; the sequence is LRRQCKCGSANCRGWLF. Zn(2+) is bound by residues cysteine 477, cysteine 479, and cysteine 484. 477-478 lines the S-adenosyl-L-methionine pocket; sequence CK.

This sequence belongs to the class V-like SAM-binding methyltransferase superfamily. Histone-lysine methyltransferase family. Suvar3-9 subfamily. Component of the Clr4 methyltransferase complex (ClrC) composed of at least clr4, rik1, pcu4, rbx1, raf1 and raf2. The cullin pcu4, rik1, raf1, raf2 and the ring-box protein rbx1 are components of an E3 ubiquitin ligase, whose activity is essential for heterochromatin assembly. Interacts directly with pcu4. Interacts with mlo3. Autocatalytic methylation of specific lysine residues in an internal loop (autoregulatory loop) promote a conformational switch that enhances the H3K9me activity of clr4.

It localises to the nucleus. The protein resides in the cytoplasm. The protein localises to the cytoskeleton. It is found in the microtubule organizing center. Its subcellular location is the spindle pole body. It localises to the chromosome. The enzyme catalyses L-lysyl(9)-[histone H3] + 3 S-adenosyl-L-methionine = N(6),N(6),N(6)-trimethyl-L-lysyl(9)-[histone H3] + 3 S-adenosyl-L-homocysteine + 3 H(+). It carries out the reaction N(6)-methyl-L-lysyl(9)-[histone H3] + S-adenosyl-L-methionine = N(6),N(6)-dimethyl-L-lysyl(9)-[histone H3] + S-adenosyl-L-homocysteine + H(+). The catalysed reaction is N(6),N(6)-dimethyl-L-lysyl(9)-[histone H3] + S-adenosyl-L-methionine = N(6),N(6),N(6)-trimethyl-L-lysyl(9)-[histone H3] + S-adenosyl-L-homocysteine + H(+). It catalyses the reaction L-lysyl-[protein] + S-adenosyl-L-methionine = N(6)-methyl-L-lysyl-[protein] + S-adenosyl-L-homocysteine + H(+). The enzyme catalyses N(6)-methyl-L-lysyl-[protein] + S-adenosyl-L-methionine = N(6),N(6)-dimethyl-L-lysyl-[protein] + S-adenosyl-L-homocysteine + H(+). It carries out the reaction N(6),N(6)-dimethyl-L-lysyl-[protein] + S-adenosyl-L-methionine = N(6),N(6),N(6)-trimethyl-L-lysyl-[protein] + S-adenosyl-L-homocysteine + H(+). The catalysed reaction is L-lysyl(9)-[histone H3] + S-adenosyl-L-methionine = N(6)-methyl-L-lysyl(9)-[histone H3] + S-adenosyl-L-homocysteine + H(+). With respect to regulation, an internal loop (autoregulatory loop) inhibits the catalytic activity of the enzyme by blocking the histone H3K9 substrate-binding pocket. Autocatalytic methylation of specific lysine residues in this loop promote a conformational switch that enhances the H3K9me activity of clr4. Functionally, histone methyltransferase which contributes to the establishment of heterochromatin by specifically methylating histone H3 to form H3K9me. Part of the Clr4 methyltransferase complex (ClrC). ClrC preferentially ubiquitylates H3K14 and ClrC-mediated H3 ubiquitination promotes clr4 methyltransferase activity. Clr4 functions as a reader and writer of H3K9 methylation. It sets the H3K9me mark and afterwards this H3K9me mark is recognized by the chromodomains of clr4 and swi6/HP1, which then recruit additional clr4 leading to the methylation of neighboring nucleosomes. H3K9me represents a specific tag for epigenetic transcriptional repression by recruiting swi6/HP1 to methylated histones which leads to transcriptional silencing within centromeric heterochromatin, telomeres, ribosomal DNA repeats, and the silent mating-type region. Clr4 methyltransferase activity promotes the assembly of a tripartite complex composed of ClrC and complexes involved in siRNA generation. Apart from H3K9, also methylates non-histone proteins such as mlo3. Interacts with mlo3 to promote the processing of centromeric and antisense RNAs. In Schizosaccharomyces pombe (strain 972 / ATCC 24843) (Fission yeast), this protein is Histone-lysine N-methyltransferase, H3 lysine-9 specific (clr4).